Consider the following 160-residue polypeptide: Allophycocyanin alpha chain (160 aa).

Asn70 is modified (N4-methylasparagine). Cys80 provides a ligand contact to (2R,3E)-phycocyanobilin.

This sequence belongs to the phycobiliprotein family. As to quaternary structure, component of the phycobilisome. Heterodimer of an alpha and a beta chain. In terms of processing, contains one covalently linked phycocyanobilin chromophore.

The protein resides in the cellular thylakoid membrane. Its function is as follows. Light-harvesting photosynthetic bile pigment-protein from the phycobiliprotein complex. Allophycocyanin has a maximum absorption at approximately 650 nanometers. The chain is Allophycocyanin alpha chain (apcA) from Mastigocladus laminosus (Fischerella sp.).